The sequence spans 321 residues: Glycolipid transfer protein domain-containing protein 2 (321 aa).

It belongs to the GLTP family.

The chain is Glycolipid transfer protein domain-containing protein 2 (Gltpd2) from Mus musculus (Mouse).